A 660-amino-acid chain; its full sequence is Oligopeptide-binding protein AliA (660 aa).

Residues 1-22 form the signal peptide; that stretch reads MKSSKLFALAGVTLLAATTLAA. The N-palmitoyl cysteine moiety is linked to residue Cys-23. Residue Cys-23 is the site of S-diacylglycerol cysteine attachment. Residues 638 to 660 form a disordered region; that stretch reads EKWMKEKEESNKKAQEDLAKHVK.

Belongs to the bacterial solute-binding protein 5 family.

The protein resides in the cell membrane. Its function is as follows. Part of the binding-protein-dependent transport system for oligopeptides; probably an oligopeptide binding protein. The chain is Oligopeptide-binding protein AliA (aliA) from Streptococcus pneumoniae serotype 4 (strain ATCC BAA-334 / TIGR4).